The following is a 23-amino-acid chain: Unknown protein NF005 from 2D-PAGE (23 aa).

The segment at 1 to 23 (AGKARKQLSKNEDTKLKEQYIXD) is disordered. Positions 9–23 (SKNEDTKLKEQYIXD) are enriched in basic and acidic residues.

In Naegleria fowleri (Brain eating amoeba), this protein is Unknown protein NF005 from 2D-PAGE.